We begin with the raw amino-acid sequence, 117 residues long: Immunoglobulin heavy variable 3-30-3 (117 aa).

The first 19 residues, 1–19, serve as a signal peptide directing secretion; sequence MEFGLSWVFLVALLRGVQC. Gln-20 is subject to Pyrrolidone carboxylic acid. A framework-1 region spans residues 20–44; it reads QVQLVESGGGVVQPGRSLRLSCAAS. The region spanning 20–117 is the Ig-like domain; that stretch reads QVQLVESGGG…EDTAVYYCAR (98 aa). A disulfide bridge connects residues Cys-41 and Cys-115. The tract at residues 45–52 is complementarity-determining-1; the sequence is GFTFSSYA. Residues 53–69 are framework-2; that stretch reads MHWVRQAPGKGLEWVAV. A complementarity-determining-2 region spans residues 70 to 77; it reads ISYDGSNK. The tract at residues 78–115 is framework-3; that stretch reads YYADSVKGRFTISRDNSKNTLYLQMNSLRAEDTAVYYC. Residues 116 to 117 are complementarity-determining-3; it reads AR.

As to quaternary structure, immunoglobulins are composed of two identical heavy chains and two identical light chains; disulfide-linked.

It is found in the secreted. Its subcellular location is the cell membrane. Its function is as follows. V region of the variable domain of immunoglobulin heavy chains that participates in the antigen recognition. Immunoglobulins, also known as antibodies, are membrane-bound or secreted glycoproteins produced by B lymphocytes. In the recognition phase of humoral immunity, the membrane-bound immunoglobulins serve as receptors which, upon binding of a specific antigen, trigger the clonal expansion and differentiation of B lymphocytes into immunoglobulins-secreting plasma cells. Secreted immunoglobulins mediate the effector phase of humoral immunity, which results in the elimination of bound antigens. The antigen binding site is formed by the variable domain of one heavy chain, together with that of its associated light chain. Thus, each immunoglobulin has two antigen binding sites with remarkable affinity for a particular antigen. The variable domains are assembled by a process called V-(D)-J rearrangement and can then be subjected to somatic hypermutations which, after exposure to antigen and selection, allow affinity maturation for a particular antigen. This chain is Immunoglobulin heavy variable 3-30-3, found in Homo sapiens (Human).